A 604-amino-acid chain; its full sequence is Phosphomethylpyrimidine synthase (604 aa).

Substrate contacts are provided by residues asparagine 218, methionine 247, tyrosine 276, histidine 312, 332–334 (SRG), 373–376 (DGLR), and glutamate 412. Zn(2+) is bound at residue histidine 416. Tyrosine 439 provides a ligand contact to substrate. Histidine 480 is a binding site for Zn(2+). [4Fe-4S] cluster is bound by residues cysteine 560, cysteine 563, and cysteine 568.

The protein belongs to the ThiC family. As to quaternary structure, homodimer. The cofactor is [4Fe-4S] cluster.

The enzyme catalyses 5-amino-1-(5-phospho-beta-D-ribosyl)imidazole + S-adenosyl-L-methionine = 4-amino-2-methyl-5-(phosphooxymethyl)pyrimidine + CO + 5'-deoxyadenosine + formate + L-methionine + 3 H(+). It participates in cofactor biosynthesis; thiamine diphosphate biosynthesis. In terms of biological role, catalyzes the synthesis of the hydroxymethylpyrimidine phosphate (HMP-P) moiety of thiamine from aminoimidazole ribotide (AIR) in a radical S-adenosyl-L-methionine (SAM)-dependent reaction. This Zymomonas mobilis subsp. mobilis (strain ATCC 31821 / ZM4 / CP4) protein is Phosphomethylpyrimidine synthase.